Here is a 3364-residue protein sequence, read N- to C-terminus: Salivary gland surface protein 1 (3364 aa).

Beta-propeller stretches follow at residues 1–344 (MLRI…VVDA) and 705–1216 (FEQE…LKAL). N-linked (GlcNAc...) asparagine glycosylation is present at asparagine 59. Intrachain disulfides connect cysteine 251/cysteine 297 and cysteine 1128/cysteine 1139. A rhs/YD-repeats region spans residues 345 to 2733 (VEPKLDQGSP…PVSQIDPDGQ (2389 aa)). Asparagine 1149 carries N-linked (GlcNAc...) asparagine glycosylation. Residues 1345–1494 (NQELVQFLGF…VHVDHVRLSP (150 aa)) are carbohydrate-binding module (CBM). The segment at 1575–1715 (HSWVESFSPY…VGIKDVIVME (141 aa)) is lectin carbohydrate-recognition domain (lectin-CRD). Residues 2225–2304 (HDKCDQNLIP…SEKMLEQGYP (80 aa)) are wedge domain. Cystine bridges form between cysteine 2253-cysteine 2285 and cysteine 2407-cysteine 2421. 5 helical membrane-spanning segments follow: residues 2734-2754 (IAVTLVLMIIGAIVGAYLGAA), 2774-2794 (IGLFAGAIMGAFAVYGGAATF), 2805-2825 (MIAGALATGVISVAGAFLGAA), 2844-2864 (WNGLLSGASIAVSFPSGFVGI), and 2878-2898 (MIYASLMVGGFLLFVYLGGGM). Residues 3126-3216 (YSPDSDGNQI…ARIAPAALRN (91 aa)) form a tox-SGS region.

In terms of processing, probably cleaved at the C-terminus. Female saliva (at protein level). Female salivary gland (at protein level). Not detected in female carcass without salivary glands. Not detected in male tissues.

The protein resides in the cell membrane. Its subcellular location is the secreted. (Microbial infection) Facilitates, but is not essential for, invasion of salivary glands by Plasmodium gallinaceum. Plays a role in Plasmodium gallinaceum oocyst development in mosquito midgut. Functionally, (Microbial infection) Probably facilitates Zika virus replication in salivary glands. In Aedes aegypti (Yellowfever mosquito), this protein is Salivary gland surface protein 1.